Here is a 156-residue protein sequence, read N- to C-terminus: Small ribosomal subunit protein uS7 (156 aa).

This sequence belongs to the universal ribosomal protein uS7 family. Part of the 30S ribosomal subunit. Contacts proteins S9 and S11.

One of the primary rRNA binding proteins, it binds directly to 16S rRNA where it nucleates assembly of the head domain of the 30S subunit. Is located at the subunit interface close to the decoding center, probably blocks exit of the E-site tRNA. This Tremblaya princeps protein is Small ribosomal subunit protein uS7.